Consider the following 426-residue polypeptide: Alpha-ionylideneethane synthase abl3 (426 aa).

The protein belongs to the alpha-ionylideneethane synthase family.

It participates in hormone biosynthesis. Functionally, alpha-ionylideneethane synthase; part of the gene cluster that mediates the biosynthesis of abscisic acid (ABA), a phytohormone that acts antagonistically toward salicylic acid (SA), jasmonic acid (JA) and ethylene (ETH) signaling, to impede plant defense responses. The first step of the pathway catalyzes the reaction from farnesyl diphosphate to alpha-ionylideneethane performed by the alpha-ionylideneethane synthase abl3 via a three-step reaction mechanism involving 2 neutral intermediates, beta-farnesene and allofarnesene. The cytochrome P450 monooxygenase abl1 might then be involved in the conversion of alpha-ionylideneethane to alpha-ionylideneacetic acid. Alpha-ionylideneacetic acid is further converted to abscisic acid in 2 steps involving the cytochrome P450 monooxygenase abl2 and the short-chain dehydrogenase/reductase abl4, via the intermediates 1'-deoxy-ABA or 1',4'-trans-diol-ABA, depending on the order of action of these 2 enzymes. Abl2 is responsible for the hydroxylation of carbon atom C-1' and abl4 might be involved in the oxidation of the C-4' carbon atom. In Leptosphaeria maculans (strain JN3 / isolate v23.1.3 / race Av1-4-5-6-7-8) (Blackleg fungus), this protein is Alpha-ionylideneethane synthase abl3.